The sequence spans 291 residues: Small ribosomal subunit protein uS2 (291 aa).

This sequence belongs to the universal ribosomal protein uS2 family.

The sequence is that of Small ribosomal subunit protein uS2 from Lawsonia intracellularis (strain PHE/MN1-00).